The sequence spans 460 residues: GTPase Der (460 aa).

EngA-type G domains lie at Lys-2–Arg-166 and Thr-175–Lys-353. GTP contacts are provided by residues Gly-8 to Ser-15, Asp-55 to Leu-59, Asn-118 to Asp-121, Gly-181 to Ser-188, Asp-228 to Leu-232, and Asn-293 to Asp-296. The region spanning Lys-354 to Gly-446 is the KH-like domain.

Belongs to the TRAFAC class TrmE-Era-EngA-EngB-Septin-like GTPase superfamily. EngA (Der) GTPase family. In terms of assembly, associates with the 50S ribosomal subunit.

GTPase that plays an essential role in the late steps of ribosome biogenesis. The chain is GTPase Der from Methylacidiphilum infernorum (isolate V4) (Methylokorus infernorum (strain V4)).